The primary structure comprises 178 residues: Orotate phosphoribosyltransferase (178 aa).

5-phospho-alpha-D-ribose 1-diphosphate is bound by residues Arg-92, Lys-93, Lys-96, and 118 to 126; that span reads EDVITTGSS. Positions 122 and 150 each coordinate orotate.

Belongs to the purine/pyrimidine phosphoribosyltransferase family. PyrE subfamily. Homodimer. Mg(2+) serves as cofactor.

It carries out the reaction orotidine 5'-phosphate + diphosphate = orotate + 5-phospho-alpha-D-ribose 1-diphosphate. Its pathway is pyrimidine metabolism; UMP biosynthesis via de novo pathway; UMP from orotate: step 1/2. Its function is as follows. Catalyzes the transfer of a ribosyl phosphate group from 5-phosphoribose 1-diphosphate to orotate, leading to the formation of orotidine monophosphate (OMP). This chain is Orotate phosphoribosyltransferase, found in Archaeoglobus fulgidus (strain ATCC 49558 / DSM 4304 / JCM 9628 / NBRC 100126 / VC-16).